The following is a 396-amino-acid chain: Orotidine 5'-phosphate decarboxylase (396 aa).

Residues aspartate 46, 68–70 (KTH), 103–112 (DRKFVDIGST), tyrosine 346, and arginine 365 each bind substrate. The Proton donor role is filled by lysine 105.

This sequence belongs to the OMP decarboxylase family.

The enzyme catalyses orotidine 5'-phosphate + H(+) = UMP + CO2. It participates in pyrimidine metabolism; UMP biosynthesis via de novo pathway; UMP from orotate: step 2/2. In Sordaria macrospora (strain ATCC MYA-333 / DSM 997 / K(L3346) / K-hell), this protein is Orotidine 5'-phosphate decarboxylase (URA3).